A 348-amino-acid chain; its full sequence is L-threonine 3-dehydrogenase (348 aa).

C42 contacts Zn(2+). Catalysis depends on charge relay system residues T44 and H47. Residues H67, E68, C97, C100, C103, and C111 each coordinate Zn(2+). Residues L179, E199, R204, 266 to 268, and 291 to 292 each bind NAD(+); these read LGL and IT.

Belongs to the zinc-containing alcohol dehydrogenase family. Homotetramer. Zn(2+) is required as a cofactor.

It is found in the cytoplasm. The enzyme catalyses L-threonine + NAD(+) = (2S)-2-amino-3-oxobutanoate + NADH + H(+). The protein operates within amino-acid degradation; L-threonine degradation via oxydo-reductase pathway; glycine from L-threonine: step 1/2. In terms of biological role, catalyzes the NAD(+)-dependent oxidation of L-threonine to 2-amino-3-ketobutyrate. To a lesser extent, also catalyzes the oxidation of L-serine, D-threonine, butan-2,3-diol, butan-1,2-diol, and propan-1,2-diol and cannot oxidize other L-amino acids. Cannot utilize NADP(H) instead of NAD(H). This Pyrococcus furiosus (strain ATCC 43587 / DSM 3638 / JCM 8422 / Vc1) protein is L-threonine 3-dehydrogenase.